The chain runs to 31 residues: Cyclotide mech-5 (31 aa).

Positions 1-31 (GVIPCGESCVFIPCISSVVGCTCKNKVCYRD) form a cross-link, cyclopeptide (Gly-Asp). 3 cysteine pairs are disulfide-bonded: Cys-5–Cys-21, Cys-9–Cys-23, and Cys-14–Cys-28.

Post-translationally, this is a cyclic peptide. In terms of processing, contains 3 disulfide bonds.

Probably participates in a plant defense mechanism (Potential). Binds to and induces leakage in phospholipd membranes, particularly ones containing 1-palmitoyl-2-oleophosphatidylethanolamine (POPE). The protein is Cyclotide mech-5 of Melicytus chathamicus (Chatham Island mahoe).